Consider the following 338-residue polypeptide: Ketol-acid reductoisomerase (NADP(+)) (338 aa).

One can recognise a KARI N-terminal Rossmann domain in the interval 1–181; the sequence is MKVYYDKDAD…GGTKGGVIET (181 aa). NADP(+) is bound by residues 24-27, arginine 47, and serine 52; that span reads YGSQ. The active site involves histidine 107. Residue glycine 133 coordinates NADP(+). Positions 182–327 constitute a KARI C-terminal knotted domain; the sequence is NFREETETDL…GQLRDMMPWI (146 aa). Residues aspartate 190, glutamate 194, glutamate 226, and glutamate 230 each coordinate Mg(2+). Serine 251 provides a ligand contact to substrate.

Belongs to the ketol-acid reductoisomerase family. Requires Mg(2+) as cofactor.

It carries out the reaction (2R)-2,3-dihydroxy-3-methylbutanoate + NADP(+) = (2S)-2-acetolactate + NADPH + H(+). It catalyses the reaction (2R,3R)-2,3-dihydroxy-3-methylpentanoate + NADP(+) = (S)-2-ethyl-2-hydroxy-3-oxobutanoate + NADPH + H(+). It functions in the pathway amino-acid biosynthesis; L-isoleucine biosynthesis; L-isoleucine from 2-oxobutanoate: step 2/4. Its pathway is amino-acid biosynthesis; L-valine biosynthesis; L-valine from pyruvate: step 2/4. Involved in the biosynthesis of branched-chain amino acids (BCAA). Catalyzes an alkyl-migration followed by a ketol-acid reduction of (S)-2-acetolactate (S2AL) to yield (R)-2,3-dihydroxy-isovalerate. In the isomerase reaction, S2AL is rearranged via a Mg-dependent methyl migration to produce 3-hydroxy-3-methyl-2-ketobutyrate (HMKB). In the reductase reaction, this 2-ketoacid undergoes a metal-dependent reduction by NADPH to yield (R)-2,3-dihydroxy-isovalerate. In Aromatoleum aromaticum (strain DSM 19018 / LMG 30748 / EbN1) (Azoarcus sp. (strain EbN1)), this protein is Ketol-acid reductoisomerase (NADP(+)).